We begin with the raw amino-acid sequence, 236 residues long: Sugar fermentation stimulation protein homolog (236 aa).

It belongs to the SfsA family.

This is Sugar fermentation stimulation protein homolog from Gloeobacter violaceus (strain ATCC 29082 / PCC 7421).